Consider the following 119-residue polypeptide: Large ribosomal subunit protein bL20 (119 aa).

Belongs to the bacterial ribosomal protein bL20 family.

Its function is as follows. Binds directly to 23S ribosomal RNA and is necessary for the in vitro assembly process of the 50S ribosomal subunit. It is not involved in the protein synthesizing functions of that subunit. This is Large ribosomal subunit protein bL20 from Laribacter hongkongensis (strain HLHK9).